The chain runs to 780 residues: Molybdenum cofactor sulfurase (780 aa).

The residue at position 246 (Lys-246) is an N6-(pyridoxal phosphate)lysine. Residue Cys-413 is part of the active site. One can recognise an MOSC domain in the interval 635 to 780; it reads LRLLRQSGQR…MTCGDVVLVE (146 aa). Ser-734 carries the post-translational modification Phosphoserine.

It belongs to the class-V pyridoxal-phosphate-dependent aminotransferase family. MOCOS subfamily. Requires pyridoxal 5'-phosphate as cofactor.

It catalyses the reaction Mo-molybdopterin + L-cysteine + AH2 = thio-Mo-molybdopterin + L-alanine + A + H2O. Its function is as follows. Sulfurates the molybdenum cofactor. Sulfation of molybdenum is essential for xanthine dehydrogenase (XDH) and aldehyde oxidase (ADO) enzymes in which molybdenum cofactor is liganded by 1 oxygen and 1 sulfur atom in active form. This chain is Molybdenum cofactor sulfurase, found in Drosophila yakuba (Fruit fly).